We begin with the raw amino-acid sequence, 216 residues long: LexA repressor (216 aa).

A DNA-binding region (H-T-H motif) is located at residues 29 to 49 (RAEIAQALGFRSPNAAEDHLK). Residues Ser-134 and Lys-171 each act as for autocatalytic cleavage activity in the active site.

The protein belongs to the peptidase S24 family. In terms of assembly, homodimer.

It catalyses the reaction Hydrolysis of Ala-|-Gly bond in repressor LexA.. Its function is as follows. Represses a number of genes involved in the response to DNA damage (SOS response), including recA and lexA. In the presence of single-stranded DNA, RecA interacts with LexA causing an autocatalytic cleavage which disrupts the DNA-binding part of LexA, leading to derepression of the SOS regulon and eventually DNA repair. The polypeptide is LexA repressor (Bordetella parapertussis (strain 12822 / ATCC BAA-587 / NCTC 13253)).